Consider the following 1388-residue polypeptide: MASTVSTCQDASPYQPRNYQLEMLEASMKENIIVAMDTGSGKTHIAVLRIKAELDICSPDKVVWFLAPTVALCIQQHEVIASNLPAVRTRTLTGLDKVELWTDQSIWDAVLNGYRVIVSTHAVLADALSHGFVKMSQLALLIFDEAHHCTRRHAANKIMQDFYHPTLTKSGPAAVPRIMGLTASPVVRSNHQELLMVESNLDAVCRTPRLHRQELLKFTHRPHLQQIWYTPTDPAGFRSASLTLGALYHAWENLDIGDDPYIQRLRKSPLDDRALKKALLTGKTYCREQLRRFVDRSRHIFEELGEWAAEYYIYASIKQLRDRVRDSYMSGDWDEAEKAYLVDFLSKIPTSDIHFALNDPDGFRISPKFESLLNFLDSSDQREFSGLIFVKQRVTVSAMTSLLSVHPYTRERFRCAAYVGWSNSSASKDILGDLLNMQLQRDTLDDFRSGRKNLIIATDVLEEGIDLSACSVVVCYDKPPNLKSFIQRRGRARRKQSTFAIMFPTDDTSADVSRWQDLEQAMIEAYQDDERQLQSVSALESLDEEVMERLTGDSTSAVLTADMAMAHLHHFCAVLPPQPYVDMRPVFSFETNEDGLLKGTVILPSCVHPKVRRTEGRRWWRTERAAMKETAFQAYKSLYEFGLVNDHLLPLTKKPELKTHDLGSMPSILETSEQYDPWIEWAYSWSSPDIHQSRIVVKMNEGRGDELCMRLIGPEYLPPLSPMTLFWNSSTTFTVTFKAAERVPLVPLSSVEDMRAITALYLKATSSRVCSAERDFMALFAPDLHHTELKGWLDTYEGSDPAMEVYSRGHNPLLMGVVRDHSRYGEPFLFRKWLVSHQNPSCSIVELECAPFPHRRNFLRRQTLANSQVDVDEAIPDSAAKNPIVAAEACTIDRLPFTMAIFGLFISAIVEQLEIELIATRLRDTILRDVSFKSTDHIITAISTPLAHRLTNYQRYEFLGDSILKFSVSCQLFFQHPNWHEGYLSEGRDMIVQNPRLAKAALDTGLDAYIVTKRLASRKWSAPLISEKLGRVPAKRQMSTKVLADVVEALIGAAYVDGGHSTAQACIRRFLPEINLHAVDTRTAARSVAPESARHMMNDRLKDHIGYTFEDESLLVEALTHPSCDYDSTTQSYQRLEYLGDAVLDMVIVSAIFNHRIQRPQGDMTKIKHAVVNANLLAFLCMEFAISEEKLDVAQTSKDSFAVTSSQESVELWRFMRYRGQGLKAARDASLARHRALRDEIASSLLQAPHYPWHALSRLNADKFFSDIIESVLGAIFVDSGGNLAPCEVFVEQIGLMAYLRRILDHGIDVRHPRSVVQQLAKTNIQFVLQRVPTEEGGASYQCSVQMEQAELFVVTGCLTAEEAEVTAAVEAIKFLTRDEGSTPLNKS.

The region spanning 23–203 (MLEASMKENI…LLMVESNLDA (181 aa)) is the Helicase ATP-binding domain. 36-43 (MDTGSGKT) serves as a coordination point for ATP. Positions 144 to 147 (DEAH) match the DEAH box motif. A Helicase C-terminal domain is found at 368-537 (KFESLLNFLD…DDERQLQSVS (170 aa)). A Dicer dsRNA-binding fold domain is found at 564–658 (AMAHLHHFCA…LPLTKKPELK (95 aa)). RNase III domains lie at 906–1059 (ISAI…VDGG) and 1098–1281 (NDRL…VDSG). Residues Glu1137, Asp1267, and Glu1270 each coordinate Mg(2+).

Belongs to the helicase family. Dicer subfamily. Mg(2+) serves as cofactor. Requires Mn(2+) as cofactor.

Dicer-like endonuclease involved in cleaving double-stranded RNA in the RNA interference (RNAi) pathway. Produces 21 to 25 bp dsRNAs (siRNAs) which target the selective destruction of homologous RNAs leading to sequence-specific suppression of gene expression, called post-transcriptional gene silencing (PTGS). Part of a broad host defense response against viral infection and transposons. In Aspergillus fumigatus (strain ATCC MYA-4609 / CBS 101355 / FGSC A1100 / Af293) (Neosartorya fumigata), this protein is Dicer-like protein 2 (dcl2).